The following is a 255-amino-acid chain: Flap endonuclease Xni (255 aa).

Residue D105 coordinates Mg(2+). In terms of domain architecture, 5'-3' exonuclease spans 163–253 (QYQMLDFIAL…NLKQFRINPI (91 aa)). L172, A173, P181, I183, and I186 together coordinate K(+). Positions 185–190 (GIGPKS) are interaction with DNA.

It belongs to the Xni family. It depends on Mg(2+) as a cofactor. K(+) serves as cofactor.

Functionally, has flap endonuclease activity. During DNA replication, flap endonucleases cleave the 5'-overhanging flap structure that is generated by displacement synthesis when DNA polymerase encounters the 5'-end of a downstream Okazaki fragment. This chain is Flap endonuclease Xni, found in Shewanella frigidimarina (strain NCIMB 400).